Consider the following 149-residue polypeptide: Alpha-crystallin A chain (149 aa).

Residues 28–138 (LLRGFMDSGI…SHSERPIPVS (111 aa)) form the sHSP domain. Histidine 55, histidine 76, glutamate 78, histidine 83, histidine 91, and histidine 130 together coordinate Zn(2+). Residues 125–149 (NLVSSHSERPIPVSREEKPTSAPSS) are disordered. Basic and acidic residues predominate over residues 130-143 (HSERPIPVSREEKP). Serine 138 is a glycosylation site (O-linked (GlcNAc) serine).

Belongs to the small heat shock protein (HSP20) family. As to quaternary structure, heteropolymer composed of three CRYAA and one CRYAB subunits. Inter-subunit bridging via zinc ions enhances stability, which is crucial as there is no protein turn over in the lens. Can also form homodimers and homotetramers (dimers of dimers) which serve as the building blocks of homooligomers. Within homooligomers, the zinc-binding motif is created from residues of 3 different molecules. His-76 and Glu-78 from one molecule are ligands of the zinc ion, and His-83 and His-130 residues from additional molecules complete the site with tetrahedral coordination geometry.

The protein resides in the cytoplasm. The protein localises to the nucleus. Contributes to the transparency and refractive index of the lens. May act as a chaperone, preventing aggregation of various proteins under a wide range of stress conditions. This chain is Alpha-crystallin A chain (CRYAA), found in Rana temporaria (European common frog).